A 379-amino-acid chain; its full sequence is MSEFLPFSRPAMGVEELAAVKEVLESGWITTGPKNQALEQAFCQLTGNQHAIAVSSATAGMHITLMALEIGKGDEVITPSLTWVSTLNMISLLGATPVMVDVDRDTLMVTPEAIESAITPRTKAIIPVHYAGAPADIDAIRAIGERYGIAVIEDAAHAVGTYYKGRHIGAKGTAIFSFHAIKNITCAEGGLIVTDNENLARQLRMLKFHGLGVDAYDRQTWGRAPQAEVLTPGYKYNLTDINAAIALTQLAKLEHLNTHRREIAQQYQQALAALPFQPLSLPAWPHVHAWHLFIIRVDEQRCGISRDALMEALKERGIGTGLHFRAAHTQKYYRERFPTLSLPNTEWNSERICSLPLFPDMTTADADRVITALQQLAGQ.

Residue lysine 182 is modified to N6-(pyridoxal phosphate)lysine.

This sequence belongs to the DegT/DnrJ/EryC1 family. ArnB subfamily. As to quaternary structure, homodimer. It depends on pyridoxal 5'-phosphate as a cofactor.

It catalyses the reaction UDP-4-amino-4-deoxy-beta-L-arabinose + 2-oxoglutarate = UDP-beta-L-threo-pentopyranos-4-ulose + L-glutamate. Its pathway is nucleotide-sugar biosynthesis; UDP-4-deoxy-4-formamido-beta-L-arabinose biosynthesis; UDP-4-deoxy-4-formamido-beta-L-arabinose from UDP-alpha-D-glucuronate: step 2/3. It participates in bacterial outer membrane biogenesis; lipopolysaccharide biosynthesis. In terms of biological role, catalyzes the conversion of UDP-4-keto-arabinose (UDP-Ara4O) to UDP-4-amino-4-deoxy-L-arabinose (UDP-L-Ara4N). The modified arabinose is attached to lipid A and is required for resistance to polymyxin and cationic antimicrobial peptides. The protein is UDP-4-amino-4-deoxy-L-arabinose--oxoglutarate aminotransferase of Shigella sonnei (strain Ss046).